Reading from the N-terminus, the 224-residue chain is Cytidylate kinase (224 aa).

Gly10–Thr18 serves as a coordination point for ATP.

It belongs to the cytidylate kinase family. Type 1 subfamily.

Its subcellular location is the cytoplasm. The catalysed reaction is CMP + ATP = CDP + ADP. The enzyme catalyses dCMP + ATP = dCDP + ADP. This Haemophilus ducreyi (strain 35000HP / ATCC 700724) protein is Cytidylate kinase.